Here is a 301-residue protein sequence, read N- to C-terminus: Ribosomal RNA small subunit methyltransferase A (301 aa).

S-adenosyl-L-methionine is bound by residues Asn18, Leu20, Gly45, Glu66, Asp91, and Asn112. The segment at Pro267–Asp301 is disordered. Residues Pro287–Asp301 are compositionally biased toward polar residues.

The protein belongs to the class I-like SAM-binding methyltransferase superfamily. rRNA adenine N(6)-methyltransferase family. RsmA subfamily.

It is found in the cytoplasm. The enzyme catalyses adenosine(1518)/adenosine(1519) in 16S rRNA + 4 S-adenosyl-L-methionine = N(6)-dimethyladenosine(1518)/N(6)-dimethyladenosine(1519) in 16S rRNA + 4 S-adenosyl-L-homocysteine + 4 H(+). Its function is as follows. Specifically dimethylates two adjacent adenosines (A1518 and A1519) in the loop of a conserved hairpin near the 3'-end of 16S rRNA in the 30S particle. May play a critical role in biogenesis of 30S subunits. This chain is Ribosomal RNA small subunit methyltransferase A, found in Colwellia psychrerythraea (strain 34H / ATCC BAA-681) (Vibrio psychroerythus).